The following is a 218-amino-acid chain: 3,4-dihydroxy-2-butanone 4-phosphate synthase (218 aa).

D-ribulose 5-phosphate is bound by residues 38 to 39 (RE), Asp43, 151 to 155 (RRGHT), and Glu175. Mg(2+) is bound at residue Glu39. His154 serves as a coordination point for Mg(2+).

It belongs to the DHBP synthase family. As to quaternary structure, homodimer. The cofactor is Mg(2+). Mn(2+) is required as a cofactor.

The catalysed reaction is D-ribulose 5-phosphate = (2S)-2-hydroxy-3-oxobutyl phosphate + formate + H(+). It participates in cofactor biosynthesis; riboflavin biosynthesis; 2-hydroxy-3-oxobutyl phosphate from D-ribulose 5-phosphate: step 1/1. Functionally, catalyzes the conversion of D-ribulose 5-phosphate to formate and 3,4-dihydroxy-2-butanone 4-phosphate. This is 3,4-dihydroxy-2-butanone 4-phosphate synthase from Vibrio cholerae serotype O1 (strain M66-2).